The chain runs to 574 residues: MDYTREILTFQFGTYANYVGTHFWNQQEANFRYGDESEQVAEEQLPNNDILYREGRNDLNRTTYTPRLLSVDLSGTLGHLPVTGELYGNFVQRDEELLPLSTGEELEQVRKRAEESGVCSPEQLEVQEQSKASISEYQRDLLKNAVVPEKNYQLAATANSWVDFLYARYHPRTLNVLPGLIRDPTAQALGTYSAGTEMWQEVSFNEEFCDRIRLYVEECDGLQGFHVLFDIDDGFGGLAGKCLEHLNDEYSRASFALPLHYPRITSYPQADTRLSHSIRVVNNVLGYHQLSEQALMFTPLSTLETIWRNNNLKSRSLPGLQWETDNLYQTSALLAAFFDTATLSYRLRQTPESLLRFCECVTPAGRKMTAAGLALPFGLREGQDLIEFLDQSGDHALLTQLTPGCEPGTSYVVQSVTARGIPAERLKRPRELAGDQLRMAAYSCDSISHMLQLYYQCTYHGSVTNAAATPLPLKTQLPFPYEMFAAGISRDGYRLPEGAERETGSRVDSAPMLAAVQNSTKLGEHLDNVHAQSHRVQLAKLQAYSNSGLERDEYDTALDQLLEFRDLYADSQYL.

This sequence belongs to the misato family.

It localises to the mitochondrion. In Drosophila melanogaster (Fruit fly), this protein is Protein misato (mst).